We begin with the raw amino-acid sequence, 135 residues long: uncharacterized protein (135 aa).

One can recognise an HTH merR-type domain in the interval 2-71; that stretch reads TYTTAKAAEK…LKDIKRFAEC (70 aa). The H-T-H motif DNA-binding region spans 5–24; that stretch reads TAKAAEKIGISAYTLRFYDK.

This is an uncharacterized protein from Haemophilus influenzae (strain ATCC 51907 / DSM 11121 / KW20 / Rd).